A 347-amino-acid chain; its full sequence is GMP reductase (347 aa).

108-131 (ADFIKLSEILAMSEELNFICIDIA) contacts NADP(+). K(+) contacts are provided by G181 and G183. Catalysis depends on C186, which acts as the Thioimidate intermediate. 216–239 (IIGDGGCSCAGDVAKAFGGGADFV) provides a ligand contact to NADP(+).

The protein belongs to the IMPDH/GMPR family. GuaC type 1 subfamily. As to quaternary structure, homotetramer.

The enzyme catalyses IMP + NH4(+) + NADP(+) = GMP + NADPH + 2 H(+). Catalyzes the irreversible NADPH-dependent deamination of GMP to IMP. It functions in the conversion of nucleobase, nucleoside and nucleotide derivatives of G to A nucleotides, and in maintaining the intracellular balance of A and G nucleotides. The sequence is that of GMP reductase from Shewanella halifaxensis (strain HAW-EB4).